The following is a 571-amino-acid chain: Proline--tRNA ligase (571 aa).

This sequence belongs to the class-II aminoacyl-tRNA synthetase family. ProS type 1 subfamily. Homodimer.

It localises to the cytoplasm. It carries out the reaction tRNA(Pro) + L-proline + ATP = L-prolyl-tRNA(Pro) + AMP + diphosphate. In terms of biological role, catalyzes the attachment of proline to tRNA(Pro) in a two-step reaction: proline is first activated by ATP to form Pro-AMP and then transferred to the acceptor end of tRNA(Pro). As ProRS can inadvertently accommodate and process non-cognate amino acids such as alanine and cysteine, to avoid such errors it has two additional distinct editing activities against alanine. One activity is designated as 'pretransfer' editing and involves the tRNA(Pro)-independent hydrolysis of activated Ala-AMP. The other activity is designated 'posttransfer' editing and involves deacylation of mischarged Ala-tRNA(Pro). The misacylated Cys-tRNA(Pro) is not edited by ProRS. In Vibrio campbellii (strain ATCC BAA-1116), this protein is Proline--tRNA ligase.